The chain runs to 180 residues: ATP synthase subunit b (180 aa).

A helical membrane pass occupies residues 15–35; that stretch reads LIPEVPELVIGLLAFAIVFFV.

The protein belongs to the ATPase B chain family. As to quaternary structure, F-type ATPases have 2 components, F(1) - the catalytic core - and F(0) - the membrane proton channel. F(1) has five subunits: alpha(3), beta(3), gamma(1), delta(1), epsilon(1). F(0) has three main subunits: a(1), b(2) and c(10-14). The alpha and beta chains form an alternating ring which encloses part of the gamma chain. F(1) is attached to F(0) by a central stalk formed by the gamma and epsilon chains, while a peripheral stalk is formed by the delta and b chains.

It localises to the cell membrane. F(1)F(0) ATP synthase produces ATP from ADP in the presence of a proton or sodium gradient. F-type ATPases consist of two structural domains, F(1) containing the extramembraneous catalytic core and F(0) containing the membrane proton channel, linked together by a central stalk and a peripheral stalk. During catalysis, ATP synthesis in the catalytic domain of F(1) is coupled via a rotary mechanism of the central stalk subunits to proton translocation. In terms of biological role, component of the F(0) channel, it forms part of the peripheral stalk, linking F(1) to F(0). The sequence is that of ATP synthase subunit b from Streptomyces avermitilis (strain ATCC 31267 / DSM 46492 / JCM 5070 / NBRC 14893 / NCIMB 12804 / NRRL 8165 / MA-4680).